The following is a 1120-amino-acid chain: Prophage side tail fiber protein homolog StfR (1120 aa).

3 disordered regions span residues 129 to 154, 221 to 442, and 960 to 1021; these read KSASDASTSAREAATHAADAADSARA, SAST…ATRA, and SGRA…AGAH. Low complexity-rich tracts occupy residues 221 to 239, 248 to 395, and 402 to 442; these read SASTATTKASEAATSARDA, SSET…SASA, and RQAS…ATRA. A compositionally biased stretch (polar residues) spans 985–1021; it reads DLGTKTTSSFDYGTKSTNNTGAHTHSVSGSTNSAGAH.

The protein belongs to the tail fiber family.

The protein is Prophage side tail fiber protein homolog StfR (stfR) of Escherichia coli (strain K12).